The sequence spans 424 residues: MDERPPEISGSLLTIGDEILLGDILNGNARHIALELRNRGFRLDRMITVGDREEDIVSSLVLCLADARFIIVTGGLGPTDDDRTNAAVSRAFDRPLVADEAYVGRLKERLAERGQAWSNEVAKMAELPAGAVKIGLDMAGFFIDHGNVPCYFLPGVPGEMKFLLAEVVIPDLARRFPLRGAYLKEVVRVQGMVESEVNRRLRDLDCRRIGVEIGYLPQGSENWVTLFAVAASEEECRTRIEKVREEVVARLGEKHISGRNDECLEKVVGERLRERGWRMAAAESCTGGLLSTRLTSIAGSSDYFDRAFITYSNQAKQDHLGVSEEMLRVHGAVSEPVALAMAEGACRGARVEVALGITGIAGPAGGSAEKPVGTVCIACVTPKEKRVEKHRFEGVRESIRQSAAQAALLLLWRVLTDDSNLHCR.

It belongs to the CinA family.

This chain is CinA-like protein, found in Syntrophobacter fumaroxidans (strain DSM 10017 / MPOB).